Consider the following 273-residue polypeptide: 5-deoxy-glucuronate isomerase (273 aa).

This sequence belongs to the isomerase IolB family.

It carries out the reaction 5-deoxy-D-glucuronate = 5-dehydro-2-deoxy-D-gluconate. Its pathway is polyol metabolism; myo-inositol degradation into acetyl-CoA; acetyl-CoA from myo-inositol: step 4/7. Involved in the isomerization of 5-deoxy-glucuronate (5DG) to 5-dehydro-2-deoxy-D-gluconate (DKG or 2-deoxy-5-keto-D-gluconate). The polypeptide is 5-deoxy-glucuronate isomerase (Listeria innocua serovar 6a (strain ATCC BAA-680 / CLIP 11262)).